Reading from the N-terminus, the 287-residue chain is Phosphoribosylaminoimidazole-succinocarboxamide synthase (287 aa).

The protein belongs to the SAICAR synthetase family.

It catalyses the reaction 5-amino-1-(5-phospho-D-ribosyl)imidazole-4-carboxylate + L-aspartate + ATP = (2S)-2-[5-amino-1-(5-phospho-beta-D-ribosyl)imidazole-4-carboxamido]succinate + ADP + phosphate + 2 H(+). Its pathway is purine metabolism; IMP biosynthesis via de novo pathway; 5-amino-1-(5-phospho-D-ribosyl)imidazole-4-carboxamide from 5-amino-1-(5-phospho-D-ribosyl)imidazole-4-carboxylate: step 1/2. The sequence is that of Phosphoribosylaminoimidazole-succinocarboxamide synthase from Neisseria meningitidis serogroup C (strain 053442).